A 251-amino-acid polypeptide reads, in one-letter code: uncharacterized protein (251 aa).

The interval 229–251 (TSTETSPEHQADLKDDNSDISST) is disordered. Residues 234–245 (SPEHQADLKDDN) are compositionally biased toward basic and acidic residues.

This is an uncharacterized protein from Acanthamoeba polyphaga (Amoeba).